The sequence spans 307 residues: uncharacterized protein (307 aa).

The chain crosses the membrane as a helical span at residues 12 to 34 (LLAFLLALIMIGSVFAYMLSGGS).

The protein resides in the membrane. This is an uncharacterized protein from Archaeoglobus fulgidus (strain ATCC 49558 / DSM 4304 / JCM 9628 / NBRC 100126 / VC-16).